We begin with the raw amino-acid sequence, 187 residues long: Putative lipoprotein LppJ (187 aa).

The signal sequence occupies residues 1–28 (MPHSTADRRLRLTRQALLAAAVVPLLAG). Cys29 carries the N-palmitoyl cysteine lipid modification. A lipid anchor (S-diacylglycerol cysteine) is attached at Cys29.

The protein localises to the cell membrane. The polypeptide is Putative lipoprotein LppJ (lppJ) (Mycobacterium tuberculosis (strain CDC 1551 / Oshkosh)).